The following is a 458-amino-acid chain: tRNA modification GTPase MnmE (458 aa).

Residues arginine 22, glutamate 84, and arginine 123 each coordinate (6S)-5-formyl-5,6,7,8-tetrahydrofolate. A TrmE-type G domain is found at 220–379 (GIATAIIGRP…LEKAIADLFF (160 aa)). Asparagine 230 is a K(+) binding site. GTP-binding positions include 230 to 235 (NVGKSS), 249 to 255 (TDIAGTT), and 274 to 277 (DTAG). Serine 234 serves as a coordination point for Mg(2+). Residues threonine 249, isoleucine 251, and threonine 254 each coordinate K(+). Threonine 255 provides a ligand contact to Mg(2+). Residue lysine 458 participates in (6S)-5-formyl-5,6,7,8-tetrahydrofolate binding.

Belongs to the TRAFAC class TrmE-Era-EngA-EngB-Septin-like GTPase superfamily. TrmE GTPase family. In terms of assembly, homodimer. Heterotetramer of two MnmE and two MnmG subunits. K(+) is required as a cofactor.

The protein localises to the cytoplasm. In terms of biological role, exhibits a very high intrinsic GTPase hydrolysis rate. Involved in the addition of a carboxymethylaminomethyl (cmnm) group at the wobble position (U34) of certain tRNAs, forming tRNA-cmnm(5)s(2)U34. The polypeptide is tRNA modification GTPase MnmE (Bacillus cereus (strain ATCC 14579 / DSM 31 / CCUG 7414 / JCM 2152 / NBRC 15305 / NCIMB 9373 / NCTC 2599 / NRRL B-3711)).